The chain runs to 157 residues: uncharacterized protein (157 aa).

The next 4 membrane-spanning stretches (helical) occupy residues 29 to 49, 52 to 72, 93 to 113, and 117 to 137; these read LLIIPLLLLWGVSASFQPAYF, VLHVAISGILLLIGLACGFGI, LGSVILILVILSLRMAARTWL, and NEMFIAIIHSMFFVPLGTITA.

It localises to the cell membrane. This is an uncharacterized protein from Bacillus subtilis (strain 168).